The chain runs to 670 residues: Acetyl-coenzyme A synthetase (670 aa).

Residues 205–208 (RRGK) and T326 each bind CoA. Residues 402–404 (GEP), 426–431 (STWWMT), D517, R532, and R543 each bind ATP. Mg(2+) is bound by residues V554, H556, and V559. A CoA-binding site is contributed by R601. At K626 the chain carries N6-acetyllysine.

Belongs to the ATP-dependent AMP-binding enzyme family. It depends on Mg(2+) as a cofactor. Acetylated. Deacetylation by the SIR2-homolog deacetylase activates the enzyme.

The enzyme catalyses acetate + ATP + CoA = acetyl-CoA + AMP + diphosphate. In terms of biological role, catalyzes the conversion of acetate into acetyl-CoA (AcCoA), an essential intermediate at the junction of anabolic and catabolic pathways. AcsA undergoes a two-step reaction. In the first half reaction, AcsA combines acetate with ATP to form acetyl-adenylate (AcAMP) intermediate. In the second half reaction, it can then transfer the acetyl group from AcAMP to the sulfhydryl group of CoA, forming the product AcCoA. The sequence is that of Acetyl-coenzyme A synthetase from Pyrobaculum arsenaticum (strain DSM 13514 / JCM 11321 / PZ6).